The following is a 301-amino-acid chain: GTPase Era (301 aa).

The 170-residue stretch at 4–173 (KAGFVALIGK…LECISKHLSP (170 aa)) folds into the Era-type G domain. The G1 stretch occupies residues 12–19 (GKPNAGKS). 12–19 (GKPNAGKS) lines the GTP pocket. The G2 stretch occupies residues 38 to 42 (NATRK). The G3 stretch occupies residues 64–67 (DTPG). Residues 64-68 (DTPGL) and 122-125 (SKID) contribute to the GTP site. The interval 122–125 (SKID) is G4. The segment at 152–154 (LSA) is G5. The KH type-2 domain occupies 204 to 280 (LSDEIPYESD…FLNLQVIAQK (77 aa)).

This sequence belongs to the TRAFAC class TrmE-Era-EngA-EngB-Septin-like GTPase superfamily. Era GTPase family. As to quaternary structure, monomer.

It is found in the cytoplasm. Its subcellular location is the cell inner membrane. An essential GTPase that binds both GDP and GTP, with rapid nucleotide exchange. Plays a role in 16S rRNA processing and 30S ribosomal subunit biogenesis and possibly also in cell cycle regulation and energy metabolism. The sequence is that of GTPase Era from Helicobacter pylori (strain Shi470).